Here is a 329-residue protein sequence, read N- to C-terminus: Interferon regulatory factor 1 (329 aa).

Positions 5-113 (RMRMRPWLEM…SAVRVYRMLP (109 aa)) form a DNA-binding region, IRF tryptophan pentad repeat. N6-acetyllysine is present on lysine 78. The tract at residues 93–166 (EVKDQSRNKG…LPDDHSSYTT (74 aa)) is disordered. Over residues 146 to 166 (DTFSDGLSSSTLPDDHSSYTT) the composition is skewed to polar residues. Glycyl lysine isopeptide (Lys-Gly) (interchain with G-Cter in SUMO) cross-links involve residues lysine 276 and lysine 300.

This sequence belongs to the IRF family. In terms of assembly, monomer. Homodimer. Interacts with EP300. Interacts with MYD88. Interacts with PIAS3. Interacts with SPOP. Post-translationally, phosphorylated by CK2 and this positively regulates its activity. Ubiquitinated in a SPOP-depedent manner. Sumoylation represses the transcriptional activity and displays enhanced resistance to protein degradation. Sumoylated by UBE2I/UBC9 and SUMO1. Inactivates the tumor suppressor activity. Elevated levels in tumor cells. Major site is Lys-276. Sumoylation is enhanced by PIAS3. Desumoylated by SENP1 in tumor cells and appears to compete with ubiquitination on C-terminal sites. In terms of processing, ubiquitinated. Appears to compete with sumoylation on C-terminal sites.

Its subcellular location is the nucleus. It localises to the cytoplasm. With respect to regulation, activated by MYD88. Transcriptional regulator which displays a remarkable functional diversity in the regulation of cellular responses. Regulates transcription of IFN and IFN-inducible genes, host response to viral and bacterial infections, regulation of many genes expressed during hematopoiesis, inflammation, immune responses and cell proliferation and differentiation, regulation of the cell cycle and induction of growth arrest and programmed cell death following DNA damage. Stimulates both innate and acquired immune responses through the activation of specific target genes and can act as a transcriptional activator and repressor regulating target genes by binding to an interferon-stimulated response element (ISRE) in their promoters. Has an essentail role in IFNG-dependent immunity to mycobacteria. Binds to a consensus sequence in gene promoters. Its target genes for transcriptional activation activity are: genes involved in anti-viral response, such as IFN-alpha/beta, RIGI, TNFSF10/TRAIL, ZBP1, OAS1/2, PIAS1/GBP, EIF2AK2/PKR and RSAD2/viperin; antibacterial response, such as GBP2, GBP5, IRGB10 and NOS2/INOS; anti-proliferative response, such as p53/TP53, LOX and CDKN1A; apoptosis, such as BBC3/PUMA, CASP1, CASP7 and CASP8; immune response, such as IL7, IL12A/B and IL15, PTGS2/COX2 and CYBB; DNA damage responses and DNA repair, such as POLQ/POLH; MHC class I expression, such as TAP1, PSMB9/LMP2, PSME1/PA28A, PSME2/PA28B and B2M and MHC class II expression, such as CIITA; metabolic enzymes, such as ACOD1/IRG1. Represses genes involved in anti-proliferative response, such as BIRC5/survivin, CCNB1, CCNE1, CDK1, CDK2 and CDK4 and in immune response, such as FOXP3, IL4, ANXA2 and TLR4. Stimulates p53/TP53-dependent transcription through enhanced recruitment of EP300 leading to increased acetylation of p53/TP53. Plays an important role in immune response directly affecting NK maturation and activity, macrophage production of IL12, Th1 development and maturation of CD8+ T-cells. Also implicated in the differentiation and maturation of dendritic cells and in the suppression of regulatory T (Treg) cells development. Acts as a tumor suppressor and plays a role not only in antagonism of tumor cell growth but also in stimulating an immune response against tumor cells. This Mus musculus (Mouse) protein is Interferon regulatory factor 1 (Irf1).